A 557-amino-acid chain; its full sequence is Acetylcholine receptor subunit alpha-L1 (557 aa).

The signal sequence occupies residues 1–23 (MAAALPPMLLLLLLLLLHHPAAA). At 24–244 (NPDAKRLYDD…NITLRRKTLF (221 aa)) the chain is on the extracellular side. Asn47 carries N-linked (GlcNAc...) asparagine glycosylation. 2 disulfide bridges follow: Cys151-Cys165 and Cys224-Cys225. The N-linked (GlcNAc...) asparagine glycan is linked to Asn235. The next 3 membrane-spanning stretches (helical) occupy residues 245–266 (YTVN…VFYL), 274–294 (IALC…ISEI), and 308–329 (YLLF…VLNV). Residues 330–500 (HYRKPSTHKM…EFDAEDQDWG (171 aa)) lie on the Cytoplasmic side of the membrane. A helical membrane pass occupies residues 501–523 (FVAMVLDRLFLWIFTIASIVGTF).

It belongs to the ligand-gated ion channel (TC 1.A.9) family. Acetylcholine receptor (TC 1.A.9.1) subfamily.

Its subcellular location is the postsynaptic cell membrane. The protein resides in the cell membrane. After binding acetylcholine, the AChR responds by an extensive change in conformation that affects all subunits and leads to opening of an ion-conducting channel across the plasma membrane. The sequence is that of Acetylcholine receptor subunit alpha-L1 from Schistocerca gregaria (Desert locust).